A 259-amino-acid polypeptide reads, in one-letter code: MTMPYYASAEQIMRDRSELARKGIARGRSVVVLTFRDGVLFVAENPSTALHKVSELYDRLGFAAVGKYNEFENLRRAGIVHADMRGYSYDRRDVTGRSLANAYAQTLGTIFTEQPKPYEVEICVAEVGRVGSPKAPQLYRITYDGSIVDEQHFVVMGGTTEPIATAMRESYRADLDLEAAVGIAVNALRQGGAGEGEKRNVDVASLEVAVLDQSRPRRAFRRITGPALEQLIPAEPAPASEPAPESKPDTETKPADPQD.

Positions 222–259 are disordered; it reads RITGPALEQLIPAEPAPASEPAPESKPDTETKPADPQD. Over residues 244–259 the composition is skewed to basic and acidic residues; the sequence is PESKPDTETKPADPQD.

It belongs to the peptidase T1A family. The 20S proteasome core is composed of 14 alpha and 14 beta subunits that assemble into four stacked heptameric rings, resulting in a barrel-shaped structure. The two inner rings, each composed of seven catalytic beta subunits, are sandwiched by two outer rings, each composed of seven alpha subunits. The catalytic chamber with the active sites is on the inside of the barrel. Has a gated structure, the ends of the cylinder being occluded by the N-termini of the alpha-subunits. Is capped by the proteasome-associated ATPase, ARC.

The protein resides in the cytoplasm. It participates in protein degradation; proteasomal Pup-dependent pathway. The formation of the proteasomal ATPase ARC-20S proteasome complex, likely via the docking of the C-termini of ARC into the intersubunit pockets in the alpha-rings, may trigger opening of the gate for substrate entry. Interconversion between the open-gate and close-gate conformations leads to a dynamic regulation of the 20S proteasome proteolysis activity. In terms of biological role, component of the proteasome core, a large protease complex with broad specificity involved in protein degradation. This chain is Proteasome subunit alpha, found in Rhodococcus jostii (strain RHA1).